The primary structure comprises 203 residues: MSNESIKAEQDLIQEGVESEVSTEEASLIDELTQANFRIEELEQLLADALAKVEEQKDSVIRAAAEVDNIRRRAAMDVEKANKFALEKFANELLPVLDNMERALQGTNPQDETTKAIYEGVELTQKSLLTAVAKFGVKPIDPQGQAFNPDQHQAIGMQPSAEFPANTVMLVMQKGYELNSRLLRPAMVMVSQGGPSQEINIEA.

The span at 1–10 (MSNESIKAEQ) shows a compositional bias: basic and acidic residues. The tract at residues 1-20 (MSNESIKAEQDLIQEGVESE) is disordered.

The protein belongs to the GrpE family. In terms of assembly, homodimer.

Its subcellular location is the cytoplasm. In terms of biological role, participates actively in the response to hyperosmotic and heat shock by preventing the aggregation of stress-denatured proteins, in association with DnaK and GrpE. It is the nucleotide exchange factor for DnaK and may function as a thermosensor. Unfolded proteins bind initially to DnaJ; upon interaction with the DnaJ-bound protein, DnaK hydrolyzes its bound ATP, resulting in the formation of a stable complex. GrpE releases ADP from DnaK; ATP binding to DnaK triggers the release of the substrate protein, thus completing the reaction cycle. Several rounds of ATP-dependent interactions between DnaJ, DnaK and GrpE are required for fully efficient folding. This is Protein GrpE from Shewanella sp. (strain MR-4).